The sequence spans 196 residues: Nodulation protein A (196 aa).

It belongs to the NodA family.

Its subcellular location is the cytoplasm. Its function is as follows. N-acyltransferase required for nodulation. Acts in the production of a small, heat-stable compound (Nod) that stimulates mitosis in various plant protoplasts. This Mesorhizobium sp. (strain 7653R) protein is Nodulation protein A.